Reading from the N-terminus, the 768-residue chain is Protein ITPRID2 (768 aa).

3 disordered regions span residues 1–24 (MTTE…AEDS), 39–78 (LQAM…ESEE), and 98–124 (RKSG…CSPG). Polar residues-rich tracts occupy residues 39–57 (LQAM…TVTS) and 102–122 (SQDF…STCS). A phosphoserine mark is found at Ser-153, Ser-177, Ser-246, Ser-248, Ser-255, Ser-268, Ser-276, and Ser-312. A disordered region spans residues 315 to 338 (SVKKEEAPQSEAPRVEECHHGRTP). Over residues 316 to 334 (VKKEEAPQSEAPRVEECHH) the composition is skewed to basic and acidic residues. Lys-317 participates in a covalent cross-link: Glycyl lysine isopeptide (Lys-Gly) (interchain with G-Cter in SUMO2). Ser-378 and Ser-411 each carry phosphoserine. Positions 468–546 (QELQVMRRSL…GLEEQLRAVR (79 aa)) form a coiled coil. Ser-549, Ser-564, Ser-569, Ser-572, Ser-627, and Ser-643 each carry phosphoserine. Disordered stretches follow at residues 605-647 (IPPG…VGKP) and 663-718 (ALTP…AAEE). A compositionally biased stretch (polar residues) spans 610 to 627 (SSESVFSQATSESSSVCS). Phosphothreonine is present on Thr-665. A compositionally biased stretch (polar residues) spans 667-677 (TAPSRTGSVQT). Ser-670 carries the phosphoserine modification. Thr-677 carries the post-translational modification Phosphothreonine. The segment covering 682–694 (ESSEEVDAAEEAP) has biased composition (acidic residues).

It is found in the cytoplasm. The protein is Protein ITPRID2 of Pongo abelii (Sumatran orangutan).